The following is a 456-amino-acid chain: N(6)-adenosine-methyltransferase non-catalytic subunit METTL14 (456 aa).

Residues 45 to 76 (AETRETCRASYDTSAPNAKRKYQDEGETDEDK) are disordered. 2 interaction with METTL3 regions span residues 135-136 (RD) and 237-238 (SG). A positively charged region required for RNA-binding region spans residues 245 to 254 (RVCLRKWGYR). Interaction with METTL3 regions lie at residues 255-258 (RCED) and 278-287 (KAVFQRTKEH). Positions 297–298 (KR) are positively charged region required for RNA-binding. The interval 308–312 (NVDID) is interaction with METTL3. A disordered region spans residues 393–456 (ERLRPKSPPP…GAHRGGFPPR (64 aa)). Phosphoserine is present on Ser-399. Residues 409 to 423 (GGGAPRGGGRGGTSA) show a composition bias toward gly residues. A compositionally biased stretch (basic and acidic residues) spans 425–440 (RGRERNRSNFRGERGG). A compositionally biased stretch (gly residues) spans 441–450 (FRGGRGGAHR).

It belongs to the MT-A70-like family. As to quaternary structure, heterodimer; heterodimerizes with METTL3 to form an antiparallel heterodimer that constitutes an active methyltransferase. Component of the WMM complex, a N6-methyltransferase complex composed of a catalytic subcomplex, named MAC, and of an associated subcomplex, named MACOM. The MAC subcomplex is composed of METTL3 and METTL14. The MACOM subcomplex is composed of WTAP, ZC3H13, CBLL1/HAKAI, VIRMA, and, in some cases of RBM15 (RBM15 or RBM15B).

It localises to the nucleus. Functionally, the METTL3-METTL14 heterodimer forms a N6-methyltransferase complex that methylates adenosine residues at the N(6) position of some mRNAs and regulates the circadian clock, differentiation of embryonic stem cells and cortical neurogenesis. In the heterodimer formed with METTL3, METTL14 constitutes the RNA-binding scaffold that recognizes the substrate rather than the catalytic core. N6-methyladenosine (m6A), which takes place at the 5'-[AG]GAC-3' consensus sites of some mRNAs, plays a role in mRNA stability and processing. M6A acts as a key regulator of mRNA stability by promoting mRNA destabilization and degradation. In embryonic stem cells (ESCs), m6A methylation of mRNAs encoding key naive pluripotency-promoting transcripts results in transcript destabilization. M6A regulates spermatogonial differentiation and meiosis and is essential for male fertility and spermatogenesis. M6A also regulates cortical neurogenesis: m6A methylation of transcripts related to transcription factors, neural stem cells, the cell cycle and neuronal differentiation during brain development promotes their destabilization and decay, promoting differentiation of radial glial cells. This Bos taurus (Bovine) protein is N(6)-adenosine-methyltransferase non-catalytic subunit METTL14 (METTL14).